We begin with the raw amino-acid sequence, 395 residues long: Chalcone synthase 1 (395 aa).

Valine 2 carries the post-translational modification N-acetylvaline. Cysteine 169 is a catalytic residue.

This sequence belongs to the thiolase-like superfamily. Chalcone/stilbene synthases family.

It carries out the reaction (E)-4-coumaroyl-CoA + 3 malonyl-CoA + 3 H(+) = 2',4,4',6'-tetrahydroxychalcone + 3 CO2 + 4 CoA. It participates in secondary metabolite biosynthesis; flavonoid biosynthesis. Functionally, the primary product of this enzyme is 4,2',4',6'-tetrahydroxychalcone (also termed naringenin-chalcone or chalcone) which can under specific conditions spontaneously isomerize into naringenin. The chain is Chalcone synthase 1 (CHS1) from Sinapis alba (White mustard).